Reading from the N-terminus, the 348-residue chain is S-adenosylmethionine-dependent nucleotide dehydratase RSAD2 (348 aa).

Positions 56–276 (SATPSSVNYH…LERHSSISCL (221 aa)) constitute a Radical SAM core domain. The [4Fe-4S] cluster site is built by Cys-70, Cys-74, and Cys-77.

This sequence belongs to the radical SAM superfamily. RSAD2 family. The cofactor is [4Fe-4S] cluster. In terms of tissue distribution, expressed at low levels in spleen and head kidney.

The protein resides in the endoplasmic reticulum membrane. Functionally, interferon-inducible iron-sulfur (4FE-4S) cluster-binding antiviral protein which plays a major role in the cell antiviral state induced by type I and type II interferon. This chain is S-adenosylmethionine-dependent nucleotide dehydratase RSAD2, found in Oncorhynchus mykiss (Rainbow trout).